A 433-amino-acid polypeptide reads, in one-letter code: MATSGDCPRSESQGEEPAECSEAGLLQEGVQPEEFVAIADYAATDETQLSFLRGEKILILRQTTADWWWGERAGCCGYIPANHVGKHVDEYDPEDTWQDEEYFGSYGTLKLHLEMLADQPRTTKYHSVILQNKESLTDKVILDVGCGTGIISLFCAHYARPRAVYAVEASEMAQHTGQLVLQNGFADIITVYQQKVEDVVLPEKVDVLVSEWMGTCLLFEFMIESILYARDAWLKEDGVIWPTMAALHLVPCSADKDYRSKVLFWDNAYEFNLSALKSLAVKEFFSKPKYNHILKPEDCLSEPCTILQLDMRTVQISDLETLRGELRFDIRKAGTLHGFTAWFSVHFQSLQEGQPPQVLSTGPFHPTTHWKQTLFMMDDPVPVHTGDVVTGSVVLQRNPVWRRHMSVALSWAVTSRQDPTSQKVGEKVFPIWR.

The disordered stretch occupies residues 1 to 20; the sequence is MATSGDCPRSESQGEEPAEC. 2 interaction with ESR1 regions span residues 1-277 and 133-275; these read MATS…SALK and KESL…NLSA. Residues 30-89 enclose the SH3 domain; that stretch reads VQPEEFVAIADYAATDETQLSFLRGEKILILRQTTADWWWGERAGCCGYIPANHVGKHVD. Residues R61 and R72 each carry the asymmetric dimethylarginine modification. The segment at 83 to 207 is interaction with RB1; sequence HVGKHVDEYD…DVVLPEKVDV (125 aa). In terms of domain architecture, SAM-dependent MTase PRMT-type spans 99–432; the sequence is DEEYFGSYGT…KVGEKVFPIW (334 aa). Positions 112, 121, 145, 168, and 197 each coordinate S-adenosyl-L-methionine. Residues E211 and E220 contribute to the active site.

It belongs to the class I-like SAM-binding methyltransferase superfamily. Protein arginine N-methyltransferase family. In terms of assembly, self-associates. Interacts with RB1 and E2F1. Interacts with NCOA6 coactivator. Interacts (via SH3 domain) with PRMT8. Interacts with AR. Interacts with NFKBIA. Interacts with ESR1, ESR2, PGR, PPARG, RARA, RXRA and THRB. Interacts with HNRNPUL1. In terms of tissue distribution, widely expressed. Highly expressed in androgen target organs such as heart, prostate, skeletal muscle, ovary and spinal cord.

The protein localises to the cytoplasm. It localises to the nucleus. The protein resides in the nucleolus. It carries out the reaction L-arginyl-[protein] + 2 S-adenosyl-L-methionine = N(omega),N(omega)-dimethyl-L-arginyl-[protein] + 2 S-adenosyl-L-homocysteine + 2 H(+). Its function is as follows. Arginine methyltransferase that methylates the guanidino nitrogens of arginyl residues in proteins such as STAT3, FBL, histone H4. Acts as a coactivator (with NCOA2) of the androgen receptor (AR)-mediated transactivation. Acts as a coactivator (with estrogen) of estrogen receptor (ER)-mediated transactivation. Enhances PGR, PPARG, RARA-mediated transactivation. May inhibit NF-kappa-B transcription and promote apoptosis. Represses E2F1 transcriptional activity (in a RB1-dependent manner). May be involved in growth regulation. The protein is Protein arginine N-methyltransferase 2 (PRMT2) of Homo sapiens (Human).